Here is a 400-residue protein sequence, read N- to C-terminus: Chalcone synthase WHP1 (400 aa).

Residue C167 is part of the active site.

This sequence belongs to the thiolase-like superfamily. Chalcone/stilbene synthases family.

The catalysed reaction is (E)-4-coumaroyl-CoA + 3 malonyl-CoA + 3 H(+) = 2',4,4',6'-tetrahydroxychalcone + 3 CO2 + 4 CoA. Its pathway is secondary metabolite biosynthesis; flavonoid biosynthesis. The primary product of this enzyme is 4,2',4',6'-tetrahydroxychalcone (also termed naringenin-chalcone or chalcone) which can under specific conditions spontaneously isomerize into naringenin. This Zea mays (Maize) protein is Chalcone synthase WHP1 (WHP1).